A 267-amino-acid polypeptide reads, in one-letter code: Small ribosomal subunit protein uS2 (267 aa).

Residues 225-267 (LREQELEGEEQEEAAPATEEEKKELIEEAVAEGEAEETEEEEK) are disordered. Residues 251 to 267 (EEAVAEGEAEETEEEEK) are compositionally biased toward acidic residues.

The protein belongs to the universal ribosomal protein uS2 family.

In Nitratiruptor sp. (strain SB155-2), this protein is Small ribosomal subunit protein uS2.